Consider the following 181-residue polypeptide: Acireductone dioxygenase 2 (181 aa).

Fe(2+) contacts are provided by histidine 97, histidine 99, glutamate 103, and histidine 141. Histidine 97, histidine 99, glutamate 103, and histidine 141 together coordinate Ni(2+).

It belongs to the acireductone dioxygenase (ARD) family. Monomer. Fe(2+) is required as a cofactor. It depends on Ni(2+) as a cofactor.

It carries out the reaction 1,2-dihydroxy-5-(methylsulfanyl)pent-1-en-3-one + O2 = 3-(methylsulfanyl)propanoate + CO + formate + 2 H(+). The catalysed reaction is 1,2-dihydroxy-5-(methylsulfanyl)pent-1-en-3-one + O2 = 4-methylsulfanyl-2-oxobutanoate + formate + 2 H(+). Its pathway is amino-acid biosynthesis; L-methionine biosynthesis via salvage pathway; L-methionine from S-methyl-5-thio-alpha-D-ribose 1-phosphate: step 5/6. Functionally, catalyzes 2 different reactions between oxygen and the acireductone 1,2-dihydroxy-3-keto-5-methylthiopentene (DHK-MTPene) depending upon the metal bound in the active site. Fe-containing acireductone dioxygenase (Fe-ARD) produces formate and 2-keto-4-methylthiobutyrate (KMTB), the alpha-ketoacid precursor of methionine in the methionine recycle pathway. Ni-containing acireductone dioxygenase (Ni-ARD) produces methylthiopropionate, carbon monoxide and formate, and does not lie on the methionine recycle pathway. This chain is Acireductone dioxygenase 2, found in Pectobacterium atrosepticum (strain SCRI 1043 / ATCC BAA-672) (Erwinia carotovora subsp. atroseptica).